A 101-amino-acid polypeptide reads, in one-letter code: Small ribosomal subunit protein uS14 (101 aa).

It belongs to the universal ribosomal protein uS14 family. In terms of assembly, part of the 30S ribosomal subunit. Contacts proteins S3 and S10.

Functionally, binds 16S rRNA, required for the assembly of 30S particles and may also be responsible for determining the conformation of the 16S rRNA at the A site. The chain is Small ribosomal subunit protein uS14 from Shewanella oneidensis (strain ATCC 700550 / JCM 31522 / CIP 106686 / LMG 19005 / NCIMB 14063 / MR-1).